A 519-amino-acid polypeptide reads, in one-letter code: Threonine synthase, chloroplastic (519 aa).

The N-terminal 40 residues, 1-40, are a transit peptide targeting the chloroplast; that stretch reads MAASCMLRSSFISPGLPQLHHQSTSKPNNGIHFFTPIKAT. An N6-(pyridoxal phosphate)lysine modification is found at Lys-196. Pyridoxal 5'-phosphate is bound by residues 328–332 and Thr-465; that span reads GNLGN.

It belongs to the threonine synthase family. As to quaternary structure, homodimer. The cofactor is pyridoxal 5'-phosphate.

Its subcellular location is the plastid. It is found in the chloroplast. It catalyses the reaction O-phospho-L-homoserine + H2O = L-threonine + phosphate. It participates in amino-acid biosynthesis; L-threonine biosynthesis; L-threonine from L-aspartate: step 5/5. Its activity is regulated as follows. Allosterically activated by S-adenosyl-methionine (SAM). Functionally, catalyzes the gamma-elimination of phosphate from L-phosphohomoserine and the beta-addition of water to produce L-threonine. In Solanum tuberosum (Potato), this protein is Threonine synthase, chloroplastic.